A 142-amino-acid chain; its full sequence is Transcriptional regulator MraZ (142 aa).

SpoVT-AbrB domains follow at residues 5–51 (ASSL…PRPV) and 77–120 (ASDV…DAAR).

Belongs to the MraZ family. Forms oligomers.

It is found in the cytoplasm. It localises to the nucleoid. This is Transcriptional regulator MraZ from Herminiimonas arsenicoxydans.